Reading from the N-terminus, the 583-residue chain is Threonine--tRNA ligase (583 aa).

Residues 185–478 (DHRKLGRELN…LVEHYGGAFP (294 aa)) form a catalytic region. 3 residues coordinate Zn(2+): cysteine 278, histidine 329, and histidine 455.

Belongs to the class-II aminoacyl-tRNA synthetase family. In terms of assembly, homodimer. The cofactor is Zn(2+).

The protein localises to the cytoplasm. The catalysed reaction is tRNA(Thr) + L-threonine + ATP = L-threonyl-tRNA(Thr) + AMP + diphosphate + H(+). Catalyzes the attachment of threonine to tRNA(Thr) in a two-step reaction: L-threonine is first activated by ATP to form Thr-AMP and then transferred to the acceptor end of tRNA(Thr). Also edits incorrectly charged L-seryl-tRNA(Thr). The protein is Threonine--tRNA ligase of Borrelia duttonii (strain Ly).